Reading from the N-terminus, the 649-residue chain is Extracellular metalloproteinase 4 (649 aa).

The N-terminal stretch at Met-1–Gly-18 is a signal peptide. The propeptide occupies His-19 to Ser-260. Residue His-443 participates in Zn(2+) binding. Residue Glu-444 is part of the active site. His-447 contacts Zn(2+). Asn-494 and Asn-609 each carry an N-linked (GlcNAc...) asparagine glycan.

It belongs to the peptidase M36 family. The cofactor is Zn(2+).

It is found in the secreted. In terms of biological role, secreted metalloproteinase probably acting as a virulence factor. The protein is Extracellular metalloproteinase 4 (MEP4) of Arthroderma otae (strain ATCC MYA-4605 / CBS 113480) (Microsporum canis).